The following is a 274-amino-acid chain: 2,3,4,5-tetrahydropyridine-2,6-dicarboxylate N-succinyltransferase (274 aa).

Substrate contacts are provided by R106 and D143.

This sequence belongs to the transferase hexapeptide repeat family. Homotrimer.

It localises to the cytoplasm. The catalysed reaction is (S)-2,3,4,5-tetrahydrodipicolinate + succinyl-CoA + H2O = (S)-2-succinylamino-6-oxoheptanedioate + CoA. Its pathway is amino-acid biosynthesis; L-lysine biosynthesis via DAP pathway; LL-2,6-diaminopimelate from (S)-tetrahydrodipicolinate (succinylase route): step 1/3. The sequence is that of 2,3,4,5-tetrahydropyridine-2,6-dicarboxylate N-succinyltransferase from Rickettsia typhi (strain ATCC VR-144 / Wilmington).